The primary structure comprises 1346 residues: MTSSNEQLVDALRASLKENEELRKESRRRADRRQEPMAIVGMSCRFAGGIRSPEDLWDAVAAGKDLVSEVPEERGWDIDSLYDPVPGRKGTTYVRNAAFLDDAAGFDAAFFGISPREALAMDPQQRQLLEASWEVFERAGIDPASVRGTDVGVYVGCGYQDYAPDIRVAPEGTGGYVVTGNSSAVASGRIAYSLGLEGPAVTVDTACSSSLVALHLALKGLRNGDCSTALVGGVAVLATPGAFIEFSSQQAMAADGRTKGFASAADGLAWGEGVAVLLLERLSDARRKGHRVLAVVRGSAINQDGASNGLTAPHGPSQQHLIRQALADARLTSSDVDVVEGHGTGTRLGDPIEAQALLATYGQGRAPGQPLRLGTLKSNIGHTQAASGVAGVIKMVQALRHGVLPKTLHVDEPTDQVDWSAGSVELLTEAVDWPERPGRLRRAGVSAFGVGGTNAHVVLEEAPAVEESPAVEPPAGGGVVPWPVSAKTSAALDAQIGQLAAYAEDRTDVDPAVAARALVDSRTAMEHRAVAVGDSREALRDALRMPEGLVRGTVTDPGRVAFVFPGQGTQWAGMGAELLDSSPEFAAAMAECETALSPYVDWSLEAVVRQAPSAPTLDRVDVVQPVTFAVMVSLAKVWQHHGITPEAVIGHSQGEIAAAYVAGALTLDDAARVVTLRSKSIAAHLAGKGGMISLALSEEATRQRIENLHGLSIAAVNGPTATVVSGDPTQIQELAQACEADGIRARIIPVDYASHSAHVETIENELADVLAGLSPQTPQVPFFSTLEGTWITEPALDGGYWYRNLRHRVGFAPAVETLATDEGFTHFIEVSAHPVLTMTLPDKVTGLATLRREDGGQHRLTTSLAEAWANGLALDWASLLPATGALSPAVPDLPTYAFQHRSYWISPAGPGEAPAHTASGREAVAETGLAWGPGAEDLDEEGRRSAVLAMVMRQAASVLRCDSPEEVPVDRPLREIGFDSLTAVDFRNRVNRLTGLQLPPTVVFQHPTPVALAERISDELAERNWAVAEPSDHEQAEEEKAAAPAGARSGADTGAGAGMFRALFRQAVEDDRYGEFLDVLAEASAFRPQFASPEACSERLDPVLLAGGPTDRAEGRAVLVGCTGTAANGGPHEFLRLSTSFQEERDFLAVPLPGYGTGTGTGTALLPADLDTALDAQARAILRAAGDAPVVLLGHSGGALLAHELAFRLERAHGAPPAGIVLVDPYPPGHQEPIEVWSRQLGEGLFAGELEPMSDARLLAMGRYARFLAGPRPGRSSAPVLLVRASEPLGDWQEERGDWRAHWDLPHTVADVPGDHFTMMRDHAPAVAEAVLSWLDAIEGIEGAGK.

Residues 3–32 (SSNEQLVDALRASLKENEELRKESRRRADR) are a coiled coil. In terms of domain architecture, Ketosynthase family 3 (KS3) spans 34–461 (QEPMAIVGMS…GTNAHVVLEE (428 aa)). Residues 37 to 1332 (MAIVGMSCRF…HAPAVAEAVL (1296 aa)) form a module 6 region. Active-site for beta-ketoacyl synthase activity residues include C207, H342, and H382. An acyltransferase region spans residues 562–844 (FVFPGQGTQW…VLTMTLPDKV (283 aa)). Residue S652 is the Acyl-ester intermediate; for acyltransferase activity of the active site. Positions 945 to 1020 (SAVLAMVMRQ…ALAERISDEL (76 aa)) constitute a Carrier domain. The residue at position 980 (S980) is an O-(pantetheine 4'-phosphoryl)serine. The tract at residues 1028–1050 (AEPSDHEQAEEEKAAAPAGARSG) is disordered. The span at 1030-1041 (PSDHEQAEEEKA) shows a compositional bias: basic and acidic residues. Residue T1125 coordinates substrate. Residues 1127–1332 (ANGGPHEFLR…HAPAVAEAVL (206 aa)) are thioesterase. The active-site Nucleophile; for thioesterase activity is the S1196. Positions 1197 and 1224 each coordinate substrate. The Proton acceptor; for thioesterase activity role is filled by H1316.

In terms of assembly, homodimer. Pikromycin PKS consists of a combination of multimodular (PikAI and PikAII) and monomodular (PikAIII and PikAIV) polypeptides each coding for a functional synthase subunit which participates in 1 (monomodular) or 2 (multimodular) of the six FAS-like elongation steps required for formation of the polyketide. Module 1, 2, 3, 4, 5, and 6 participating in biosynthesis steps 1, 2, 3, 4, 5, and 6, respectively. Requires pantetheine 4'-phosphate as cofactor.

It carries out the reaction 5 (S)-methylmalonyl-CoA + malonyl-CoA + 5 NADPH + 11 H(+) = 10-deoxymethynolide + 6 CO2 + 5 NADP(+) + 6 CoA + 2 H2O. It catalyses the reaction 6 (S)-methylmalonyl-CoA + malonyl-CoA + 5 NADPH + 12 H(+) = narbonolide + 7 CO2 + 5 NADP(+) + 7 CoA + 2 H2O. It functions in the pathway antibiotic biosynthesis. Its activity is regulated as follows. Irreversibly inhibited by (2S,3R,4S)-2,4-dihydroxy-3-methylhexyl-phosphonic acid and (3R,4S)-4-hydroxy-3-methyl-2-oxohexyl-phosphonic acid. Involved in the biosynthesis of 12- and 14-membered ring macrolactone antibiotics such as methymycin and neomethymycin, and pikromycin and narbomycin, respectively. Component of the pikromycin PKS which catalyzes the biosynthesis of both precursors 10-deoxymethynolide (12-membered ring macrolactone) and narbonolide (14-membered ring macrolactone). Chain elongation through PikAI, PikAII and PikAIII followed by thioesterase catalyzed termination results in the production of 10-deoxymethynolide, while continued elongation through PikAIV, followed by thioesterase (TE) catalyzed cyclization results in the biosynthesis of the narbonolide. The thioesterase can use a series of diketide-N-acetylcysteamine (SNAC) thioesters, but has a strong preference for the 2-methyl-3-ketopentanoyl-SNAC over the stereoisomers of 2-methyl-3-hydroxyacyl-SNAC. This is Pikromycin polyketide synthase component PikAIV from Streptomyces venezuelae.